Consider the following 138-residue polypeptide: Small ribosomal subunit protein uS12m (138 aa).

The N-terminal 29 residues, 1–29 (MSWSGLLHGLNTSLTCGPALVPRLWATCS), are a transit peptide targeting the mitochondrion. The interval 36 to 56 (MHRLGPPKRPPRKLGPTEGRP) is disordered.

Belongs to the universal ribosomal protein uS12 family. As to quaternary structure, component of the mitochondrial small ribosomal subunit (mt-SSU). Mature mammalian 55S mitochondrial ribosomes consist of a small (28S) and a large (39S) subunit. The 28S small subunit contains a 12S ribosomal RNA (12S mt-rRNA) and 30 different proteins. The 39S large subunit contains a 16S rRNA (16S mt-rRNA), a copy of mitochondrial valine transfer RNA (mt-tRNA(Val)), which plays an integral structural role, and 52 different proteins.

The protein resides in the mitochondrion. This is Small ribosomal subunit protein uS12m (MRPS12) from Homo sapiens (Human).